Reading from the N-terminus, the 446-residue chain is Glucose-6-phosphate isomerase (446 aa).

Residue Glu-288 is the Proton donor of the active site. Catalysis depends on residues His-309 and Lys-423.

Belongs to the GPI family.

The protein localises to the cytoplasm. The enzyme catalyses alpha-D-glucose 6-phosphate = beta-D-fructose 6-phosphate. Its pathway is carbohydrate biosynthesis; gluconeogenesis. The protein operates within carbohydrate degradation; glycolysis; D-glyceraldehyde 3-phosphate and glycerone phosphate from D-glucose: step 2/4. In terms of biological role, catalyzes the reversible isomerization of glucose-6-phosphate to fructose-6-phosphate. The sequence is that of Glucose-6-phosphate isomerase from Lacticaseibacillus casei (strain BL23) (Lactobacillus casei).